Reading from the N-terminus, the 143-residue chain is CRISPR-associated endoribonuclease Cas2 (143 aa).

Asp14 lines the Mg(2+) pocket.

The protein belongs to the CRISPR-associated endoribonuclease Cas2 protein family. As to quaternary structure, homodimer, forms a heterotetramer with a Cas1 homodimer. The cofactor is Mg(2+).

In terms of biological role, CRISPR (clustered regularly interspaced short palindromic repeat), is an adaptive immune system that provides protection against mobile genetic elements (viruses, transposable elements and conjugative plasmids). CRISPR clusters contain sequences complementary to antecedent mobile elements and target invading nucleic acids. CRISPR clusters are transcribed and processed into CRISPR RNA (crRNA). Functions as a ssRNA-specific endoribonuclease. Involved in the integration of spacer DNA into the CRISPR cassette. In Campylobacter jejuni subsp. jejuni serotype O:2 (strain ATCC 700819 / NCTC 11168), this protein is CRISPR-associated endoribonuclease Cas2.